The sequence spans 891 residues: 26S proteasome non-ATPase regulatory subunit 2 homolog A (891 aa).

The disordered stretch occupies residues 1–44 (MAPTQDPNSVGGGAKKDEATLKVPSKDPKKKDEKKDEDLSEEDL). Residues 14–21 (AKKDEATL) carry the Nuclear localization signal motif. Basic and acidic residues predominate over residues 14–37 (AKKDEATLKVPSKDPKKKDEKKDE). K218 is covalently cross-linked (Glycyl lysine isopeptide (Lys-Gly) (interchain with G-Cter in ubiquitin)). T219 bears the O-acetylthreonine mark. PC repeat units follow at residues 414-447 (SAAA…PIIA), 448-484 (GALL…SVRI), 485-519 (GAIM…PLDV), 522-556 (FASL…AELG), 565-594 (LGLG…KIRK), 674-705 (LALG…EVAM), and 724-739 (AGML…KDMS).

This sequence belongs to the proteasome subunit S2 family. As to quaternary structure, component of the 19S regulatory particle (RP/PA700) base subcomplex of the 26S proteasome. The 26S proteasome is composed of a core protease (CP), known as the 20S proteasome, capped at one or both ends by the 19S regulatory particle (RP/PA700). The RP/PA700 complex is composed of at least 17 different subunits in two subcomplexes, the base and the lid, which form the portions proximal and distal to the 20S proteolytic core, respectively. Interacts with JMJ27. Expressed in stems, leaves, buds, flowers, siliques and developing seeds.

It localises to the nucleus. The protein resides in the cytoplasm. In terms of biological role, acts as a regulatory subunit of the 26 proteasome which is involved in the ATP-dependent degradation of ubiquitinated proteins. Required during embryogenesis. Required for optimal plant growth and stress responses. Required for innate immunity. Prevents JMJ27 accumulation in non-drought conditions. This chain is 26S proteasome non-ATPase regulatory subunit 2 homolog A, found in Arabidopsis thaliana (Mouse-ear cress).